A 445-amino-acid polypeptide reads, in one-letter code: Phosphoglucosamine mutase (445 aa).

Ser-104 acts as the Phosphoserine intermediate in catalysis. Residues Ser-104, Asp-243, Asp-245, and Asp-247 each contribute to the Mg(2+) site. Ser-104 bears the Phosphoserine mark.

The protein belongs to the phosphohexose mutase family. It depends on Mg(2+) as a cofactor. In terms of processing, activated by phosphorylation.

The catalysed reaction is alpha-D-glucosamine 1-phosphate = D-glucosamine 6-phosphate. Catalyzes the conversion of glucosamine-6-phosphate to glucosamine-1-phosphate. The chain is Phosphoglucosamine mutase from Neisseria subflava.